We begin with the raw amino-acid sequence, 203 residues long: uncharacterized protein (203 aa).

The helical transmembrane segment at 171–191 (VGYLSIWLKEYWYLVVLFVLI) threads the bilayer.

The protein resides in the membrane. This is an uncharacterized protein from Methanocaldococcus jannaschii (strain ATCC 43067 / DSM 2661 / JAL-1 / JCM 10045 / NBRC 100440) (Methanococcus jannaschii).